Here is a 395-residue protein sequence, read N- to C-terminus: Gastric triacylglycerol lipase (395 aa).

The first 18 residues, Met-1 to Gly-18, serve as a signal peptide directing secretion. Residues Asn-33, Asn-68, and Asn-98 are each glycosylated (N-linked (GlcNAc...) asparagine). Positions Pro-77–Trp-376 constitute an AB hydrolase-1 domain. Residue Ser-171 is the Nucleophile of the active site. Cys-245 and Cys-254 are joined by a disulfide. N-linked (GlcNAc...) asparagine glycosylation is present at Asn-270. Active-site charge relay system residues include Asp-342 and His-371.

It belongs to the AB hydrolase superfamily. Lipase family. Secreted by the serous (von Ebner's) glands at the back of the rat tongue.

The protein resides in the secreted. It carries out the reaction a triacylglycerol + H2O = a diacylglycerol + a fatty acid + H(+). It catalyses the reaction 1,2,3-tri-(9Z-octadecenoyl)-glycerol + H2O = 1,2-di-(9Z-octadecenoyl)-sn-glycerol + (9Z)-octadecenoate + H(+). The catalysed reaction is 1,2,3-trioctanoylglycerol + H2O = 1,2-dioctanoyl-sn-glycerol + octanoate + H(+). Catalyzes the hydrolysis of triacylglycerols to yield free fatty acids, diacylglycerol, monoacylglycerol, and glycerol. Shows a preferential hydrolysis at the sn-3 position of triacylglycerol. The polypeptide is Gastric triacylglycerol lipase (Lipf) (Rattus norvegicus (Rat)).